We begin with the raw amino-acid sequence, 453 residues long: MSPQTETKAGVGFKAGVKEYKLTYYTPEYETKDTDILAAFRVTPQPGVPPEERGAAVAAESSTGTWTTVWTDGLTSLDRYKGRCYHIEPVPGEEDQFIAYVAYPLDLFEEGSVTNMFTSIVGNVFGFKALRALRLEDLRIPVAYVKTFQGPPHGIQVERDKLNKYGRPLLGCTIKPKLGLSAKNYGRAVYECLRGGLDFTKDDENVNSQPFMRWRDRFLFCAEAIYKSQAETGEIKGHYLNATAGTCEEMIKRAVFARELGVPIVMHDYLTGGFTANTSLAHYCRDNGLLLHIHRAMHAVIDRQKNHGMHFRVLAKALRMSGGDHIHSGTVVGKLEGERDITLGFVDLLRDDYIEKDRSRGIYFTQDWVSLPGVLPVASRGIHVWHMPALTEIFGDDSVLQFGGGTIGHPWGNAPGAVANRVALEACVKARNEGRDLAAEGGEIIREACKWSP.

A propeptide spanning residues 1–2 (MS) is cleaved from the precursor. At Pro3 the chain carries N-acetylproline. Lys14 bears the N6,N6,N6-trimethyllysine mark. Substrate is bound by residues Asn123 and Thr173. The Proton acceptor role is filled by Lys175. Lys177 lines the substrate pocket. Mg(2+) contacts are provided by Lys201, Asp203, and Glu204. At Lys201 the chain carries N6-carboxylysine. His294 (proton acceptor) is an active-site residue. Substrate-binding residues include Arg295, His327, and Ser379.

This sequence belongs to the RuBisCO large chain family. Type I subfamily. As to quaternary structure, heterohexadecamer of 8 large chains and 8 small chains; disulfide-linked. The disulfide link is formed within the large subunit homodimers. It depends on Mg(2+) as a cofactor. Post-translationally, the disulfide bond which can form in the large chain dimeric partners within the hexadecamer appears to be associated with oxidative stress and protein turnover.

The protein localises to the plastid. Its subcellular location is the chloroplast. It carries out the reaction 2 (2R)-3-phosphoglycerate + 2 H(+) = D-ribulose 1,5-bisphosphate + CO2 + H2O. The enzyme catalyses D-ribulose 1,5-bisphosphate + O2 = 2-phosphoglycolate + (2R)-3-phosphoglycerate + 2 H(+). Functionally, ruBisCO catalyzes two reactions: the carboxylation of D-ribulose 1,5-bisphosphate, the primary event in carbon dioxide fixation, as well as the oxidative fragmentation of the pentose substrate in the photorespiration process. Both reactions occur simultaneously and in competition at the same active site. This Galium elongatum (Great marsh bedstraw) protein is Ribulose bisphosphate carboxylase large chain.